The primary structure comprises 574 residues: M-phase inducer phosphatase 2 (574 aa).

Disordered regions lie at residues 31–51 (GFGFGSDGLLGSPERAASSSP) and 90–110 (RRTSECSLSSESSESSDAGLC). At Ser42 the chain carries Phosphoserine. Residues 90–105 (RRTSECSLSSESSESS) are compositionally biased toward low complexity. Ser166 carries the post-translational modification Phosphoserine; by MELK. Ser246 carries the phosphoserine modification. A Phosphoserine; by MAPKAPK2 and MELK modification is found at Ser319. Residue Ser319 is modified to Phosphoserine; by MELK and MAPK14. The segment at 339-359 (DVPVLSKRRKSGTPLEEQQLE) is disordered. Ser349 carries the post-translational modification Phosphoserine; by AURKA. At Ser370 the chain carries Phosphoserine; by BRSK1 and MAPK14. The 108-residue stretch at 425-532 (IVEKFVIVDC…FFPQHPNFCE (108 aa)) folds into the Rhodanese domain. Cys481 is an active-site residue. Phosphoserine is present on Ser557.

Belongs to the MPI phosphatase family. As to quaternary structure, interacts with MAPK14 and 14-3-3 proteins. Phosphorylated by BRSK1 in vitro. Phosphorylated by CHEK1, which inhibits the activity of this protein. Phosphorylation at Ser-349 by AURKA might locally participate in the control of the onset of mitosis. Phosphorylation by MELK at Ser-166 promotes localization to the centrosome and the spindle poles during mitosis. Phosphorylation at Ser-319 and Ser-370 by MAPK14 is required for binding to 14-3-3 proteins.

The protein resides in the cytoplasm. The protein localises to the cytoskeleton. It is found in the microtubule organizing center. Its subcellular location is the centrosome. It localises to the spindle pole. It catalyses the reaction O-phospho-L-tyrosyl-[protein] + H2O = L-tyrosyl-[protein] + phosphate. Its activity is regulated as follows. Stimulated by B-type cyclins. Tyrosine protein phosphatase which functions as a dosage-dependent inducer of mitotic progression. Directly dephosphorylates CDK1 and stimulates its kinase activity. Required for G2/M phases of the cell cycle progression and abscission during cytokinesis in a ECT2-dependent manner. The three isoforms seem to have a different level of activity. This chain is M-phase inducer phosphatase 2 (Cdc25b), found in Rattus norvegicus (Rat).